Consider the following 1039-residue polypeptide: Protein male-specific lethal-1 (1039 aa).

Residues 1-13 show a composition bias toward basic residues; that stretch reads MDKRFKWPPKKRA. Disordered regions lie at residues 1-44 and 171-199; these read MDKR…HLHQ and RRKNQRRNDNDDDDDDPPLPPAAPQQKLI. Phosphoserine is present on S18. S238 is subject to Phosphoserine. 4 disordered regions span residues 244–266, 358–454, 485–691, and 729–799; these read HAGAVTNQPASKRSESKGRGEFN, GQSV…GNQN, KKDK…EIDV, and IYPP…SSTT. The span at 255-266 shows a compositional bias: basic and acidic residues; that stretch reads KRSESKGRGEFN. Over residues 368-392 the composition is skewed to acidic residues; that stretch reads EEDDDEDDEDDENSDKDDDSEEDDY. Positions 397–407 are enriched in basic and acidic residues; the sequence is SDADVNARTEE. Polar residues predominate over residues 431-445; the sequence is AHSTPNHQQKSSTQA. Position 433 is a phosphoserine (S433). T434 carries the phosphothreonine modification. S492 and S496 each carry phosphoserine. Composition is skewed to basic and acidic residues over residues 504 to 515 and 523 to 570; these read PHQEDAIVDHNA and PKPD…DAPK. Polar residues-rich tracts occupy residues 581 to 592 and 609 to 625; these read TKTSSRESTLPK and NHQSTKTQTDPVKTQRL. S585 is modified (phosphoserine). T659 bears the Phosphothreonine mark. Phosphoserine is present on residues S682 and S684. Position 747 is a phosphothreonine (T747). S749 carries the post-translational modification Phosphoserine. T750, T751, and T753 each carry phosphothreonine. The span at 759-768 shows a compositional bias: polar residues; it reads QHAVTSSMDQ. A phosphoserine mark is found at S764 and S765. T788 bears the Phosphothreonine mark. At S810 the chain carries Phosphoserine. A phosphothreonine mark is found at T813 and T832. The PEHE domain occupies 865–983; the sequence is SLEIPKWRDV…EARDDFGVPW (119 aa). 2 positions are modified to phosphoserine: S879 and S889. An interaction with mof HAT domain region spans residues 886–904; the sequence is ELLSDATFERRHQKYVKDE. The interval 1011–1039 is disordered; it reads IPTTAAEARHQENHSSYVFPKRRKRQKNR. T1014 is modified (phosphothreonine). Phosphoserine is present on S1025. Residues 1030 to 1039 show a composition bias toward basic residues; it reads PKRRKRQKNR. Residues 1032–1037 carry the Nuclear localization signal motif; that stretch reads RRKRQK.

Belongs to the msl-1 family. Component of the male-specific lethal (MSL) histone acetyltransferase complex, composed of mof, mle, msl-1, msl-2 and msl-3 proteins, as well as roX1 and roX2 non-coding RNAs. Interacts (via PEHE domain) with mof (via HAT domain) and msl-3 (via MRG domain); both interactions are direct. Interacts with tamo via the nuclear localization signal. Component of a maternal MSL subcomplex composed of mof, msl-1 and msl-3. In terms of processing, phosphorylation at Ser-18, Thr743, Thr-747 and Thr-751 is required to promote phosphorylation of 'Ser-5' of the C-terminal heptapeptide repeat domain (CTD) of the largest RNA polymerase II subunit Polr2A. Phosphorylated by Cdk7 in vitro. In contrast, phosphorylation at Ser-18, Thr743, Thr-747 and Thr-751 does not affect its role in dosage compensation in males. Ubiquitinated by msl-2.

The protein resides in the nucleus. The protein localises to the chromosome. Functionally, component of the male-specific lethal (MSL) histone acetyltransferase complex, a multiprotein complex essential for elevating transcription of the single X chromosome in the male (X chromosome dosage compensation). The MSL complex specifically associates with the single X chromosome in males and mediates formation of H4K16ac, promoting a two-fold activation of X chromosome. In complex with msl-2, promotes ubiquitination of histone H2B. In addition to its role in dosage compensation in males, regulates the activity of gene promoters: acts together with Cdk7 to promote phosphorylation of 'Ser-5' of the C-terminal heptapeptide repeat domain (CTD) of the largest RNA polymerase II subunit Polr2A. In Drosophila melanogaster (Fruit fly), this protein is Protein male-specific lethal-1.